Here is a 1132-residue protein sequence, read N- to C-terminus: Major DNA-binding protein (1132 aa).

The segment at 1103-1132 (VEELFPSPGVPSLTVGKKRKIASLLSDLDL) is required for nuclear localization.

It belongs to the herpesviridae major DNA-binding protein family. In terms of assembly, homooligomers. Forms double-helical filaments necessary for the formation of replication compartments within the host nucleus. Interacts with the origin-binding protein. Interacts with the helicase primase complex; this interaction stimulates primer synthesis activity of the helicase-primase complex. Interacts with the DNA polymerase. Interacts with the alkaline exonuclease; this interaction increases its nuclease processivity.

Its subcellular location is the host nucleus. Plays several crucial roles in viral infection. Participates in the opening of the viral DNA origin to initiate replication by interacting with the origin-binding protein. May disrupt loops, hairpins and other secondary structures present on ssDNA to reduce and eliminate pausing of viral DNA polymerase at specific sites during elongation. Promotes viral DNA recombination by performing strand-transfer, characterized by the ability to transfer a DNA strand from a linear duplex to a complementary single-stranded DNA circle. Can also catalyze the renaturation of complementary single strands. Additionally, reorganizes the host cell nucleus, leading to the formation of prereplicative sites and replication compartments. This process is driven by the protein which can form double-helical filaments in the absence of DNA. This is Major DNA-binding protein from Human herpesvirus 8 type P (isolate GK18) (HHV-8).